Reading from the N-terminus, the 1399-residue chain is DNA-directed RNA polymerase subunit beta' (1399 aa).

Residues Cys-70, Cys-72, Cys-85, and Cys-88 each coordinate Zn(2+). Mg(2+)-binding residues include Asp-460, Asp-462, and Asp-464. 4 residues coordinate Zn(2+): Cys-814, Cys-888, Cys-895, and Cys-898.

The protein belongs to the RNA polymerase beta' chain family. As to quaternary structure, the RNAP catalytic core consists of 2 alpha, 1 beta, 1 beta' and 1 omega subunit. When a sigma factor is associated with the core the holoenzyme is formed, which can initiate transcription. Mg(2+) serves as cofactor. The cofactor is Zn(2+).

The catalysed reaction is RNA(n) + a ribonucleoside 5'-triphosphate = RNA(n+1) + diphosphate. Its function is as follows. DNA-dependent RNA polymerase catalyzes the transcription of DNA into RNA using the four ribonucleoside triphosphates as substrates. In Pseudomonas putida (strain ATCC 47054 / DSM 6125 / CFBP 8728 / NCIMB 11950 / KT2440), this protein is DNA-directed RNA polymerase subunit beta'.